The following is a 144-amino-acid chain: Ribonuclease VapC45 (144 aa).

2 residues coordinate Mg(2+): aspartate 7 and aspartate 102.

Belongs to the PINc/VapC protein family. Requires Mg(2+) as cofactor.

Functionally, toxic component of a type II toxin-antitoxin (TA) system. An RNase. Its cognate antitoxin is VapB45. In Mycobacterium tuberculosis (strain CDC 1551 / Oshkosh), this protein is Ribonuclease VapC45.